A 424-amino-acid polypeptide reads, in one-letter code: UPF0597 protein Sputcn32_1209 (424 aa).

The protein belongs to the UPF0597 family.

This chain is UPF0597 protein Sputcn32_1209, found in Shewanella putrefaciens (strain CN-32 / ATCC BAA-453).